The chain runs to 670 residues: Tripeptidyl-peptidase SED1 (670 aa).

Residues M1–A20 form the signal peptide. The propeptide at A21–S231 is removed in mature form. One can recognise a Peptidase S53 domain in the interval L241–L669. Residues E318 and D322 each act as charge relay system in the active site. Residues N334, N387, N488, N508, and N551 are each glycosylated (N-linked (GlcNAc...) asparagine). The active-site Charge relay system is the S586. Ca(2+) is bound by residues D627, V628, G647, and D649.

Ca(2+) is required as a cofactor.

The protein localises to the secreted. It is found in the extracellular space. It catalyses the reaction Release of an N-terminal tripeptide from a polypeptide.. Its function is as follows. Secreted tripeptidyl-peptidase which degrades proteins at acidic pHs and is involved in virulence. The polypeptide is Tripeptidyl-peptidase SED1 (SED1) (Arthroderma otae (strain ATCC MYA-4605 / CBS 113480) (Microsporum canis)).